The chain runs to 270 residues: Ribosomal RNA-processing protein 7 homolog (270 aa).

A coiled-coil region spans residues 233-268 (TFQIKKNRQEKAQELLKKFEEDRKRITQLKQARNFK).

It belongs to the RRP7 family.

The sequence is that of Ribosomal RNA-processing protein 7 homolog from Caenorhabditis elegans.